A 400-amino-acid polypeptide reads, in one-letter code: Bifunctional enzyme IspD/IspF (400 aa).

Positions 1–240 (MQESTMKFGI…EKLSHALPDV (240 aa)) are 2-C-methyl-D-erythritol 4-phosphate cytidylyltransferase. A 2-C-methyl-D-erythritol 2,4-cyclodiphosphate synthase region spans residues 241-400 (RTGNGYDVHQ…ATVVYQGRPL (160 aa)). Positions 247 and 249 each coordinate a divalent metal cation. 4-CDP-2-C-methyl-D-erythritol 2-phosphate contacts are provided by residues 247-249 (DVH) and 273-274 (HS). An a divalent metal cation-binding site is contributed by H281. 4-CDP-2-C-methyl-D-erythritol 2-phosphate contacts are provided by residues 295–297 (DIG), 371–374 (TTNE), F378, and R381.

The protein in the N-terminal section; belongs to the IspD/TarI cytidylyltransferase family. IspD subfamily. In the C-terminal section; belongs to the IspF family. A divalent metal cation is required as a cofactor.

It catalyses the reaction 2-C-methyl-D-erythritol 4-phosphate + CTP + H(+) = 4-CDP-2-C-methyl-D-erythritol + diphosphate. The enzyme catalyses 4-CDP-2-C-methyl-D-erythritol 2-phosphate = 2-C-methyl-D-erythritol 2,4-cyclic diphosphate + CMP. It functions in the pathway isoprenoid biosynthesis; isopentenyl diphosphate biosynthesis via DXP pathway; isopentenyl diphosphate from 1-deoxy-D-xylulose 5-phosphate: step 2/6. The protein operates within isoprenoid biosynthesis; isopentenyl diphosphate biosynthesis via DXP pathway; isopentenyl diphosphate from 1-deoxy-D-xylulose 5-phosphate: step 4/6. Its function is as follows. Bifunctional enzyme that catalyzes the formation of 4-diphosphocytidyl-2-C-methyl-D-erythritol from CTP and 2-C-methyl-D-erythritol 4-phosphate (MEP) (IspD), and catalyzes the conversion of 4-diphosphocytidyl-2-C-methyl-D-erythritol 2-phosphate (CDP-ME2P) to 2-C-methyl-D-erythritol 2,4-cyclodiphosphate (ME-CPP) with a corresponding release of cytidine 5-monophosphate (CMP) (IspF). The chain is Bifunctional enzyme IspD/IspF from Agrobacterium fabrum (strain C58 / ATCC 33970) (Agrobacterium tumefaciens (strain C58)).